Here is a 453-residue protein sequence, read N- to C-terminus: Ethanolamine ammonia-lyase large subunit (453 aa).

Substrate contacts are provided by residues 160-162 (RLQ) and Asn-193. Adenosylcob(III)alamin contacts are provided by Pro-194 and Gln-246. A substrate-binding site is contributed by Glu-287. Ser-295 contributes to the adenosylcob(III)alamin binding site. Asp-362 provides a ligand contact to substrate. Residue Met-401 participates in adenosylcob(III)alamin binding.

It belongs to the EutB family. As to quaternary structure, the basic unit is a heterodimer which dimerizes to form tetramers. The heterotetramers trimerize; 6 large subunits form a core ring with 6 small subunits projecting outwards. The cofactor is adenosylcob(III)alamin.

Its subcellular location is the bacterial microcompartment. The catalysed reaction is ethanolamine = acetaldehyde + NH4(+). The protein operates within amine and polyamine degradation; ethanolamine degradation. Its function is as follows. Catalyzes the deamination of various vicinal amino-alcohols to oxo compounds. It is spontaneously inactivated by its substrate and reactivated by EutA. May play a role in BMC assembly or maintenance. Expression of the eut operon allows this bacteria to use ethanolamine (EA) as a carbon, nitrogen and energy source. It relies on cobalamin (vitamin B12) both as a cofactor for the ethanolamine ammonia-lyase activity and to induce the operon. EA enhances bacterial survival in macrophages in a concentration-dependent manner, suggesting it is an important nutrient during infection. This Salmonella typhimurium (strain LT2 / SGSC1412 / ATCC 700720) protein is Ethanolamine ammonia-lyase large subunit.